The following is a 64-amino-acid chain: Tracheal antimicrobial peptide (64 aa).

An N-terminal signal peptide occupies residues 1 to 26; sequence MRLHHLLLALLFLVLSAWSGFTQGVG. Disulfide bonds link cysteine 31–cysteine 60, cysteine 38–cysteine 53, and cysteine 43–cysteine 61.

This sequence belongs to the beta-defensin family. LAP/TAP subfamily. As to expression, tracheal epithelium.

The protein localises to the secreted. In terms of biological role, has antibacterial activity in vitro against Escherichia coli, Staphylococcus aureus, Klebsiella pneumonia, and Pseudomonas aeruginosa. In addition, the peptide is active against Candida albicans, indicating a broad spectrum of activity. The chain is Tracheal antimicrobial peptide from Bos taurus (Bovine).